The sequence spans 102 residues: NADH-quinone oxidoreductase subunit K (102 aa).

Transmembrane regions (helical) follow at residues isoleucine 5–leucine 25, isoleucine 31–phenylalanine 51, and phenylalanine 66–phenylalanine 86.

Belongs to the complex I subunit 4L family. In terms of assembly, NDH-1 is composed of 14 different subunits. Subunits NuoA, H, J, K, L, M, N constitute the membrane sector of the complex.

The protein localises to the cell inner membrane. The enzyme catalyses a quinone + NADH + 5 H(+)(in) = a quinol + NAD(+) + 4 H(+)(out). Its function is as follows. NDH-1 shuttles electrons from NADH, via FMN and iron-sulfur (Fe-S) centers, to quinones in the respiratory chain. The immediate electron acceptor for the enzyme in this species is believed to be ubiquinone. Couples the redox reaction to proton translocation (for every two electrons transferred, four hydrogen ions are translocated across the cytoplasmic membrane), and thus conserves the redox energy in a proton gradient. The polypeptide is NADH-quinone oxidoreductase subunit K (Bartonella henselae (strain ATCC 49882 / DSM 28221 / CCUG 30454 / Houston 1) (Rochalimaea henselae)).